A 208-amino-acid polypeptide reads, in one-letter code: NAD(P)H-quinone oxidoreductase subunit I (208 aa).

2 consecutive 4Fe-4S ferredoxin-type domains span residues 55 to 84 (GRIH…VDWV) and 95 to 124 (RNYS…MTEE). The [4Fe-4S] cluster site is built by Cys64, Cys67, Cys70, Cys74, Cys104, Cys107, Cys110, and Cys114.

Belongs to the complex I 23 kDa subunit family. As to quaternary structure, NDH-1 is composed of at least 11 different subunits. [4Fe-4S] cluster serves as cofactor.

The protein localises to the cellular thylakoid membrane. It carries out the reaction a plastoquinone + NADH + (n+1) H(+)(in) = a plastoquinol + NAD(+) + n H(+)(out). It catalyses the reaction a plastoquinone + NADPH + (n+1) H(+)(in) = a plastoquinol + NADP(+) + n H(+)(out). In terms of biological role, NDH-1 shuttles electrons from an unknown electron donor, via FMN and iron-sulfur (Fe-S) centers, to quinones in the respiratory and/or the photosynthetic chain. The immediate electron acceptor for the enzyme in this species is believed to be plastoquinone. Couples the redox reaction to proton translocation, and thus conserves the redox energy in a proton gradient. This Prochlorococcus marinus (strain AS9601) protein is NAD(P)H-quinone oxidoreductase subunit I.